The primary structure comprises 181 residues: TATA-box-binding protein (181 aa).

Repeat copies occupy residues 7 to 83 (IVNV…IKEL) and 98 to 173 (VQNM…SATL).

The protein belongs to the TBP family.

Its function is as follows. General factor that plays a role in the activation of archaeal genes transcribed by RNA polymerase. Binds specifically to the TATA box promoter element which lies close to the position of transcription initiation. The sequence is that of TATA-box-binding protein from Methanococcus vannielii (strain ATCC 35089 / DSM 1224 / JCM 13029 / OCM 148 / SB).